The chain runs to 364 residues: Alanine racemase (364 aa).

Lys34 serves as the catalytic Proton acceptor; specific for D-alanine. An N6-(pyridoxal phosphate)lysine modification is found at Lys34. Position 129 (Arg129) interacts with substrate. Residue Tyr259 is the Proton acceptor; specific for L-alanine of the active site. Substrate is bound at residue Met307.

The protein belongs to the alanine racemase family. Pyridoxal 5'-phosphate serves as cofactor.

It carries out the reaction L-alanine = D-alanine. It participates in amino-acid biosynthesis; D-alanine biosynthesis; D-alanine from L-alanine: step 1/1. Catalyzes the interconversion of L-alanine and D-alanine. May also act on other amino acids. This Coxiella burnetii (strain CbuK_Q154) (Coxiella burnetii (strain Q154)) protein is Alanine racemase (alr).